Consider the following 286-residue polypeptide: Acetylglutamate kinase (286 aa).

Substrate contacts are provided by residues 63–64 (GG), Arg-85, and Asn-178.

The protein belongs to the acetylglutamate kinase family. ArgB subfamily.

It is found in the cytoplasm. The enzyme catalyses N-acetyl-L-glutamate + ATP = N-acetyl-L-glutamyl 5-phosphate + ADP. It participates in amino-acid biosynthesis; L-arginine biosynthesis; N(2)-acetyl-L-ornithine from L-glutamate: step 2/4. Functionally, catalyzes the ATP-dependent phosphorylation of N-acetyl-L-glutamate. This is Acetylglutamate kinase from Clostridioides difficile (strain 630) (Peptoclostridium difficile).